Reading from the N-terminus, the 225-residue chain is Thymidylate kinase (225 aa).

9-16 (GIEGCGKT) is an ATP binding site.

The protein belongs to the thymidylate kinase family.

It catalyses the reaction dTMP + ATP = dTDP + ADP. Phosphorylation of dTMP to form dTDP in both de novo and salvage pathways of dTTP synthesis. This is Thymidylate kinase from Citrifermentans bemidjiense (strain ATCC BAA-1014 / DSM 16622 / JCM 12645 / Bem) (Geobacter bemidjiensis).